Consider the following 352-residue polypeptide: Elongation factor Tu, mitochondrial (352 aa).

A tr-type G domain is found at 45 to 241 (RPHVNVGTIG…AIDTHIPLPH (197 aa)). Residues 54 to 61 (GHVDHGKT) form a G1 region. Residues aspartate 57, glycine 59, lysine 60, threonine 61, and threonine 62 each contribute to the GTP site. Threonine 61 is a Mg(2+) binding site. Residues 95 to 99 (GITIN) are G2. Residues 116 to 119 (DCPG) form a G3 region. Asparagine 171, aspartate 174, serine 209, alanine 210, and leucine 211 together coordinate GTP. The G4 stretch occupies residues 171–174 (NKAD). The tract at residues 209-211 (SAL) is G5.

It localises to the mitochondrion. The catalysed reaction is GTP + H2O = GDP + phosphate + H(+). Functionally, GTP hydrolase that promotes the GTP-dependent binding of aminoacyl-tRNA to the A-site of ribosomes during protein biosynthesis. The polypeptide is Elongation factor Tu, mitochondrial (Gallus gallus (Chicken)).